Reading from the N-terminus, the 338-residue chain is tRNA N6-adenosine threonylcarbamoyltransferase (338 aa).

His-110, His-114, and Tyr-131 together coordinate Fe cation. Substrate-binding positions include Tyr-131–Gly-135, Asp-163, Asp-184, and Asn-268. Residue Asp-296 participates in Fe cation binding.

The protein belongs to the KAE1 / TsaD family. The cofactor is Fe(2+).

It localises to the cytoplasm. The catalysed reaction is L-threonylcarbamoyladenylate + adenosine(37) in tRNA = N(6)-L-threonylcarbamoyladenosine(37) in tRNA + AMP + H(+). Required for the formation of a threonylcarbamoyl group on adenosine at position 37 (t(6)A37) in tRNAs that read codons beginning with adenine. Is probably involved in the transfer of the threonylcarbamoyl moiety of threonylcarbamoyl-AMP (TC-AMP) to the N6 group of A37. In Staphylothermus marinus (strain ATCC 43588 / DSM 3639 / JCM 9404 / F1), this protein is tRNA N6-adenosine threonylcarbamoyltransferase.